The sequence spans 206 residues: FMN-dependent NADH:quinone oxidoreductase 1 (206 aa).

FMN-binding positions include S9, 15 to 17, and 139 to 142; these read SVS and SRGG.

It belongs to the azoreductase type 1 family. Homodimer. FMN is required as a cofactor.

It carries out the reaction 2 a quinone + NADH + H(+) = 2 a 1,4-benzosemiquinone + NAD(+). The enzyme catalyses N,N-dimethyl-1,4-phenylenediamine + anthranilate + 2 NAD(+) = 2-(4-dimethylaminophenyl)diazenylbenzoate + 2 NADH + 2 H(+). Quinone reductase that provides resistance to thiol-specific stress caused by electrophilic quinones. Its function is as follows. Also exhibits azoreductase activity. Catalyzes the reductive cleavage of the azo bond in aromatic azo compounds to the corresponding amines. The chain is FMN-dependent NADH:quinone oxidoreductase 1 from Cupriavidus pinatubonensis (strain JMP 134 / LMG 1197) (Cupriavidus necator (strain JMP 134)).